Consider the following 582-residue polypeptide: Dihydroxy-acid dehydratase 3 (582 aa).

[2Fe-2S] cluster is bound at residue Cys-67. Asp-99 is a Mg(2+) binding site. Cys-140 contacts [2Fe-2S] cluster. Positions 141 and 142 each coordinate Mg(2+). Lys-142 is subject to N6-carboxylysine. Residue Cys-212 participates in [2Fe-2S] cluster binding. Glu-462 is a Mg(2+) binding site. Ser-488 (proton acceptor) is an active-site residue.

It belongs to the IlvD/Edd family. As to quaternary structure, homodimer. [2Fe-2S] cluster serves as cofactor. Mg(2+) is required as a cofactor.

The catalysed reaction is (2R)-2,3-dihydroxy-3-methylbutanoate = 3-methyl-2-oxobutanoate + H2O. The enzyme catalyses (2R,3R)-2,3-dihydroxy-3-methylpentanoate = (S)-3-methyl-2-oxopentanoate + H2O. The protein operates within amino-acid biosynthesis; L-isoleucine biosynthesis; L-isoleucine from 2-oxobutanoate: step 3/4. Its pathway is amino-acid biosynthesis; L-valine biosynthesis; L-valine from pyruvate: step 3/4. Its function is as follows. Functions in the biosynthesis of branched-chain amino acids. Catalyzes the dehydration of (2R,3R)-2,3-dihydroxy-3-methylpentanoate (2,3-dihydroxy-3-methylvalerate) into 2-oxo-3-methylpentanoate (2-oxo-3-methylvalerate) and of (2R)-2,3-dihydroxy-3-methylbutanoate (2,3-dihydroxyisovalerate) into 2-oxo-3-methylbutanoate (2-oxoisovalerate), the penultimate precursor to L-isoleucine and L-valine, respectively. This is Dihydroxy-acid dehydratase 3 from Bradyrhizobium diazoefficiens (strain JCM 10833 / BCRC 13528 / IAM 13628 / NBRC 14792 / USDA 110).